The chain runs to 137 residues: Phosphoribosyl-AMP cyclohydrolase (137 aa).

Residue Asp84 participates in Mg(2+) binding. Position 85 (Cys85) interacts with Zn(2+). 2 residues coordinate Mg(2+): Asp86 and Asp88. Residues Cys101 and Cys108 each contribute to the Zn(2+) site.

This sequence belongs to the PRA-CH family. Homodimer. The cofactor is Mg(2+). It depends on Zn(2+) as a cofactor.

The protein resides in the cytoplasm. It catalyses the reaction 1-(5-phospho-beta-D-ribosyl)-5'-AMP + H2O = 1-(5-phospho-beta-D-ribosyl)-5-[(5-phospho-beta-D-ribosylamino)methylideneamino]imidazole-4-carboxamide. The protein operates within amino-acid biosynthesis; L-histidine biosynthesis; L-histidine from 5-phospho-alpha-D-ribose 1-diphosphate: step 3/9. Functionally, catalyzes the hydrolysis of the adenine ring of phosphoribosyl-AMP. The polypeptide is Phosphoribosyl-AMP cyclohydrolase (Chlorobaculum tepidum (strain ATCC 49652 / DSM 12025 / NBRC 103806 / TLS) (Chlorobium tepidum)).